The sequence spans 109 residues: Cell division protein ZapA (109 aa).

Positions 22–99 form a coiled coil; it reads EQQDALNLAA…IEQALLEQGR (78 aa).

This sequence belongs to the ZapA family. Type 1 subfamily. In terms of assembly, homodimer. Interacts with FtsZ.

It localises to the cytoplasm. Its function is as follows. Activator of cell division through the inhibition of FtsZ GTPase activity, therefore promoting FtsZ assembly into bundles of protofilaments necessary for the formation of the division Z ring. It is recruited early at mid-cell but it is not essential for cell division. The polypeptide is Cell division protein ZapA (Erwinia tasmaniensis (strain DSM 17950 / CFBP 7177 / CIP 109463 / NCPPB 4357 / Et1/99)).